A 459-amino-acid chain; its full sequence is Phosphoglucosamine mutase (459 aa).

The Phosphoserine intermediate role is filled by Ser102. Mg(2+) is bound by residues Ser102, Asp243, Asp245, and Asp247. Ser102 carries the phosphoserine modification.

This sequence belongs to the phosphohexose mutase family. The cofactor is Mg(2+). Post-translationally, activated by phosphorylation.

The enzyme catalyses alpha-D-glucosamine 1-phosphate = D-glucosamine 6-phosphate. Catalyzes the conversion of glucosamine-6-phosphate to glucosamine-1-phosphate. This chain is Phosphoglucosamine mutase, found in Bartonella henselae (strain ATCC 49882 / DSM 28221 / CCUG 30454 / Houston 1) (Rochalimaea henselae).